The primary structure comprises 693 residues: Elongation factor G (693 aa).

The region spanning 8–282 (KNTRNIGIMA…AVIDYLPSPL (275 aa)) is the tr-type G domain. GTP-binding positions include 17 to 24 (AHIDAGKT), 81 to 85 (DTPGH), and 135 to 138 (NKMD).

The protein belongs to the TRAFAC class translation factor GTPase superfamily. Classic translation factor GTPase family. EF-G/EF-2 subfamily.

It localises to the cytoplasm. Functionally, catalyzes the GTP-dependent ribosomal translocation step during translation elongation. During this step, the ribosome changes from the pre-translocational (PRE) to the post-translocational (POST) state as the newly formed A-site-bound peptidyl-tRNA and P-site-bound deacylated tRNA move to the P and E sites, respectively. Catalyzes the coordinated movement of the two tRNA molecules, the mRNA and conformational changes in the ribosome. The chain is Elongation factor G from Staphylococcus intermedius.